The sequence spans 283 residues: Dihydropteroate synthase type-1 (283 aa).

Positions 6-262 (VTVFGILNLT…APGDLRSAIT (257 aa)) constitute a Pterin-binding domain. Asn-13 is a binding site for Mg(2+). (7,8-dihydropterin-6-yl)methyl diphosphate is bound by residues Asp-86, Asn-105, Asp-177, Lys-216, and 250–252 (RTH).

It belongs to the DHPS family. Homodimer or homotrimer. The cofactor is Mg(2+).

The enzyme catalyses (7,8-dihydropterin-6-yl)methyl diphosphate + 4-aminobenzoate = 7,8-dihydropteroate + diphosphate. It functions in the pathway cofactor biosynthesis; tetrahydrofolate biosynthesis; 7,8-dihydrofolate from 2-amino-4-hydroxy-6-hydroxymethyl-7,8-dihydropteridine diphosphate and 4-aminobenzoate: step 1/2. In terms of biological role, catalyzes the condensation of para-aminobenzoate (pABA) with 6-hydroxymethyl-7,8-dihydropterin diphosphate (DHPt-PP) to form 7,8-dihydropteroate (H2Pte), the immediate precursor of folate derivatives. Implicated in resistance to sulfonamide. This chain is Dihydropteroate synthase type-1 (sulI), found in Mycolicibacterium fortuitum (Mycobacterium fortuitum).